A 191-amino-acid polypeptide reads, in one-letter code: Adenylate kinase (191 aa).

Residue 10 to 15 (GAGKGT) coordinates ATP. Residues 30–59 (STGDMLRAARTSGTEMGNLVAGVMDRGELV) are NMP. AMP is bound by residues Thr31, Arg36, 57 to 59 (ELV), 83 to 86 (GFPR), and Gln90. An LID region spans residues 124–140 (NRAKEAAAAGQPVRADD). An ATP-binding site is contributed by Arg125. AMP contacts are provided by Arg137 and Arg148. Gly176 is a binding site for ATP.

The protein belongs to the adenylate kinase family. In terms of assembly, monomer.

It localises to the cytoplasm. It catalyses the reaction AMP + ATP = 2 ADP. It functions in the pathway purine metabolism; AMP biosynthesis via salvage pathway; AMP from ADP: step 1/1. Its function is as follows. Catalyzes the reversible transfer of the terminal phosphate group between ATP and AMP. Plays an important role in cellular energy homeostasis and in adenine nucleotide metabolism. The polypeptide is Adenylate kinase (Jannaschia sp. (strain CCS1)).